A 258-amino-acid chain; its full sequence is Regulatory protein RecX (258 aa).

This sequence belongs to the RecX family.

It localises to the cytoplasm. Its function is as follows. Modulates RecA activity. In Streptococcus equi subsp. equi (strain 4047), this protein is Regulatory protein RecX.